The primary structure comprises 174 residues: Ribosome maturation factor RimM (174 aa).

The PRC barrel domain maps to 95–174; sequence DDEFYWRDLI…QIQVEWPSDF (80 aa).

Belongs to the RimM family. As to quaternary structure, binds ribosomal protein uS19.

The protein resides in the cytoplasm. Its function is as follows. An accessory protein needed during the final step in the assembly of 30S ribosomal subunit, possibly for assembly of the head region. Essential for efficient processing of 16S rRNA. May be needed both before and after RbfA during the maturation of 16S rRNA. It has affinity for free ribosomal 30S subunits but not for 70S ribosomes. This Idiomarina loihiensis (strain ATCC BAA-735 / DSM 15497 / L2-TR) protein is Ribosome maturation factor RimM.